Consider the following 373-residue polypeptide: P2Y purinoceptor 1 (373 aa).

The Extracellular segment spans residues 1–51 (MTEVLWPAAPNGTDAAFLASPGFHWGNSTATSTAAAAAPFRCALTKTGFQF). 2 N-linked (GlcNAc...) asparagine glycosylation sites follow: Asn11 and Asn27. Disulfide bonds link Cys42–Cys296 and Cys124–Cys202. Lys46 contacts ADP. Residues 52-74 (YYLPAVYIVVFIIGFLGNSIAIW) traverse the membrane as a helical segment. The Cytoplasmic portion of the chain corresponds to 75 to 87 (MFVFHMKPWSGIS). A helical transmembrane segment spans residues 88–109 (VYMFNLALADFLYVLTLPALIF). Residues 110–125 (YYFNKTNWIFGDAMCK) lie on the Extracellular side of the membrane. Residue Asn113 is glycosylated (N-linked (GlcNAc...) asparagine). Residues 126-147 (LQRFIFHVNLYGSILFLTCISA) traverse the membrane as a helical segment. Topologically, residues 148 to 166 (HRYSGVVYPLKSLGRLKKK) are cytoplasmic. Residues 167–188 (NAVYISVLVWLIVVVAISPILF) traverse the membrane as a helical segment. Over 189-214 (YSGTGIRKNKTITCYDTTSDEYLRSY) the chain is Extracellular. N-linked (GlcNAc...) asparagine glycosylation is present at Asn197. An ADP-binding site is contributed by 203-205 (YDT). A helical membrane pass occupies residues 215–237 (FIYSMCTTVAMFCVPLVLILGCY). Residues 238-260 (GLIVRALIYKDLDNSPLRRKSIY) are Cytoplasmic-facing. The chain crosses the membrane as a helical span at residues 261-284 (LVIIVLTVFAVSYIPFHVMKTMNL). ADP contacts are provided by residues 283 to 287 (NLRAR), 303 to 306 (YATY), and Arg310. Residues 285–303 (RARLDFQTPEMCTFNDRVY) are Extracellular-facing. Residues 304 to 325 (ATYQVTRGLASLNSCVDPILYF) traverse the membrane as a helical segment. At 326–373 (LAGDTFRRRLSRATRKASRRSEANLQSKSEDMTLNILSEFKQNGDTSL) the chain is on the cytoplasmic side.

It belongs to the G-protein coupled receptor 1 family.

It is found in the cell membrane. Its function is as follows. Receptor for extracellular adenine nucleotides such as ADP. In platelets, binding to ADP leads to mobilization of intracellular calcium ions via activation of phospholipase C, a change in platelet shape, and ultimately platelet aggregation. The protein is P2Y purinoceptor 1 (P2RY1) of Cavia porcellus (Guinea pig).